Here is a 185-residue protein sequence, read N- to C-terminus: Casparian strip membrane protein 5 (185 aa).

Topologically, residues 1–25 (MKAEAVESGEASTIIAAPKRGINRG) are cytoplasmic. The helical transmembrane segment at 26-46 (ISIADLILRGVAAIGTFASAL) threads the bilayer. Topologically, residues 47-75 (TMGTTSETLTIFTQPIMIRAKYNDLPSLT) are extracellular. Residues 76–96 (FFVIANSIVCGYLVLSIPLSI) traverse the membrane as a helical segment. Over 97 to 108 (SHFIRREARITR) the chain is Cytoplasmic. The chain crosses the membrane as a helical span at residues 109–129 (IILVIFDTAMVELLTAGASAA). The Extracellular portion of the chain corresponds to 130–160 (TVVVYLAHKRNANWLAICQQFNNFCERISGS). Residues 161–181 (LIGSFASIIMIMLIIITSAVA) traverse the membrane as a helical segment. The Cytoplasmic segment spans residues 182–185 (LSRH).

This sequence belongs to the Casparian strip membrane proteins (CASP) family. In terms of assembly, homodimer and heterodimers.

The protein resides in the cell membrane. In terms of biological role, regulates membrane-cell wall junctions and localized cell wall deposition. Required for establishment of the Casparian strip membrane domain (CSD) and the subsequent formation of Casparian strips, a cell wall modification of the root endodermis that determines an apoplastic barrier between the intraorganismal apoplasm and the extraorganismal apoplasm and prevents lateral diffusion. The protein is Casparian strip membrane protein 5 of Populus trichocarpa (Western balsam poplar).